The chain runs to 839 residues: MKKRASVDSKESEDPPQEDYSLDPLDVDANSKTPPAKPHTFSVSKSRNRLFGKSDLEESSPIDCSFREGEAASCPTITVSSVVTSPRPADGPTSTRQLTQDSIPTSAEKPLKLYDRRSIFDAVAQNNCQDLDSLLPFLQKSKKRLTDTEFKDPETGKTCLLKAMLNLHNGQNDTISLLLDIARQTNSLKEFVNASYTDSYYRGQTALHIAIERRNMVLVTLLVENGADVQAAANGDFFKKTKGRPGFYFGELPLSLAACTNQLAIVKFLLQNSWQPADISARDSVGNTVLHALVEVADNTADNTKFVTSMYNEILILGAKLYPTLKLEELTNKKGFTPLALAASSGKIGVLAYILQREIPEPECRHLSRKFTEWAYGPVHSSLYDLSCIDTCEKNSVLEVIAYSSSETPNRHDMLLVEPLNRLLQDKWDRFVKRIFYFNFFIYCLYMIIFTMAAYYRPVDGLPPYKMKNTVGDYFRVTGEILSVIGGFHFFFRGIQYFLQRRPSVKTLFVDSYSEILFFVQSLFLLASVVLYFSHRKEYVACMVFSLALGWTNMLYYTRGFQQMGIYAVMIEKMILRDLCRFMFVYLVFLFGFSTAVVTLIEDGKNESLSAEPHRWRGPGCRSAKNSYNSLYSTCLELFKFTIGMGDLEFTENYDFKAVFIILLLAYVILTYILLLNMLIALMGETVNKIAQESKNIWKLQRAITILDTEKSFLKCMRKAFRSGKLLQVGYTPDGKDDYRWCFRVDEVNWTTWNTNVGIINEDPGNCEGVKRTLSFSLRSGRVSGRNWKNFALVPLLRDASTRDRHSAQPEEVHLKHFSGSLKPEDAEVFKDSAVPGEK.

Basic and acidic residues predominate over residues 1–13 (MKKRASVDSKESE). 2 disordered regions span residues 1–59 (MKKR…LEES) and 82–107 (VVTS…PTSA). The Cytoplasmic portion of the chain corresponds to 1–433 (MKKRASVDSK…LQDKWDRFVK (433 aa)). Residues 92–105 (PTSTRQLTQDSIPT) show a composition bias toward polar residues. An ANK 1 repeat occupies 111-139 (LKLYDRRSIFDAVAQNNCQDLDSLLPFLQ). Arg117 is an ATP binding site. Ser118 is modified (phosphoserine; by PKA and PKD). A Phosphothreonine; by PKA; in vitro modification is found at Thr146. ANK repeat units follow at residues 154–187 (ETGK…QTNS), 204–229 (QTAL…GADV), 250–277 (GELP…WQPA), 286–322 (GNTV…AKLY), and 336–359 (FTPL…QREI). ATP contacts are provided by residues Lys157, Lys162, Asn166, 201–204 (YRGQ), and 212–213 (ER). Thr372 carries the post-translational modification Phosphothreonine; by PKA; in vitro. One copy of the ANK 7 repeat lies at 394–416 (KNSVLEVIAYSSSETPNRHDMLL). A helical transmembrane segment spans residues 434–455 (RIFYFNFFIYCLYMIIFTMAAY). Over 456–472 (YRPVDGLPPYKMKNTVG) the chain is Extracellular. A helical transmembrane segment spans residues 473 to 497 (DYFRVTGEILSVIGGFHFFFRGIQY). Residues 498-510 (FLQRRPSVKTLFV) lie on the Cytoplasmic side of the membrane. Phosphoserine; by PKC/PRKCE is present on Ser504. A helical transmembrane segment spans residues 511–532 (DSYSEILFFVQSLFLLASVVLY). 513-514 (YS) provides a ligand contact to resiniferatoxin. Over 533–535 (FSH) the chain is Extracellular. Residues 536 to 556 (RKEYVACMVFSLALGWTNMLY) form a helical membrane-spanning segment. Resiniferatoxin-binding residues include Thr552 and Arg559. Residues 557–559 (YTR) are Cytoplasmic-facing. A helical membrane pass occupies residues 560–598 (GFQQMGIYAVMIEKMILRDLCRFMFVYLVFLFGFSTAVV). Topologically, residues 599–630 (TLIEDGKNESLSAEPHRWRGPGCRSAKNSYNS) are extracellular. Asn606 carries N-linked (GlcNAc...) asparagine glycosylation. Positions 631 to 652 (LYSTCLELFKFTIGMGDLEFTE) form an intramembrane region, pore-forming. Gly644 serves as a coordination point for Na(+). A Selectivity filter motif is present at residues 644 to 647 (GMGD). Asp647 contacts Ca(2+). Residues 653–656 (NYDF) are Extracellular-facing. The chain crosses the membrane as a helical span at residues 657–683 (KAVFIILLLAYVILTYILLLNMLIALM). The Cytoplasmic segment spans residues 684-839 (GETVNKIAQE…FKDSAVPGEK (156 aa)). The tract at residues 685–713 (ETVNKIAQESKNIWKLQRAITILDTEKSF) is AD. Thr705 carries the post-translational modification Phosphothreonine. Residues 768–802 (EGVKRTLSFSLRSGRVSGRNWKNFALVPLLRDAST) form an interaction with calmodulin region. Position 775 is a phosphoserine (Ser775). The interval 778 to 793 (LRSGRVSGRNWKNFAL) is required for PIP2-mediated channel inhibition. A Phosphoserine; by PKC/PRKCE and PKC/PRKCZ modification is found at Ser801. At Ser821 the chain carries Phosphoserine.

Belongs to the transient receptor (TC 1.A.4) family. TrpV subfamily. TRPV1 sub-subfamily. Homotetramer. Interacts with PIRT. May also form a heteromeric channel with TRPV3. Interacts with CALM, PRKCM and CSK. Interacts with PRKCG and NTRK1, probably by forming a trimeric complex. Interacts with the Scolopendra mutilans RhTx toxin. Interacts with TMEM100. Interacts with PACS2. Phosphorylation by PKA reverses capsaicin-induced dephosphorylation at multiple sites, probably including Ser-118 as a major phosphorylation site. Phosphorylation by CAMKII seems to regulate binding to vanilloids. Phosphorylated and modulated by PRKCE, PRKCM and probably PRKCZ. Dephosphorylation by calcineurin seems to lead to receptor desensitization and phosphorylation by CAMKII recovers activity.

The protein resides in the postsynaptic cell membrane. It is found in the cell projection. It localises to the dendritic spine membrane. Its subcellular location is the cell membrane. The catalysed reaction is Ca(2+)(in) = Ca(2+)(out). The enzyme catalyses Mg(2+)(in) = Mg(2+)(out). It catalyses the reaction Na(+)(in) = Na(+)(out). It carries out the reaction K(+)(in) = K(+)(out). With respect to regulation, channel activity is activated via the interaction with PIRT and phosphatidylinositol 4,5-bisphosphate (PIP2). Both PIRT and PIP2 are required to activate channel activity. The channel is sensitized by ATP binding. Repeated stimulation with capsaicin gives rise to progressively smaller responses, due to desensitization. This desensitization is triggered by the influx of calcium ions and is inhibited by elevated ATP levels. Ca(2+) and CALM displace ATP from its binding site and trigger a conformation change that leads to a closed, desensitized channel. Intracellular PIP2 inhibits desensitization. The double-knot toxin (DkTx) from the Chinese earth tiger tarantula activates the channel and traps it in an open conformation. The Scolopendra mutilans RhTx toxin potentiates the heat activation pathway mediated by this channel by binding to the charge-rich outer pore region (in an activated state). Its function is as follows. Non-selective calcium permeant cation channel involved in detection of noxious chemical and thermal stimuli. Seems to mediate proton influx and may be involved in intracellular acidosis in nociceptive neurons. Involved in mediation of inflammatory pain and hyperalgesia. Sensitized by a phosphatidylinositol second messenger system activated by receptor tyrosine kinases, which involves PKC isozymes and PCL. Activation by vanilloids, like capsaicin, and temperatures higher than 42 degrees Celsius. Upon activation, exhibits a time- and Ca(2+)-dependent outward rectification, followed by a long-lasting refractory state. Mild extracellular acidic pH (6.5) potentiates channel activation by noxious heat and vanilloids, whereas acidic conditions (pH &lt;6) directly activate the channel. Can be activated by endogenous compounds, including 12-hydroperoxytetraenoic acid and bradykinin. Acts as ionotropic endocannabinoid receptor with central neuromodulatory effects. Triggers a form of long-term depression (TRPV1-LTD) mediated by the endocannabinoid anandamine in the hippocampus and nucleus accumbens by affecting AMPA receptors endocytosis. In Cavia porcellus (Guinea pig), this protein is Transient receptor potential cation channel subfamily V member 1 (Trpv1).